Consider the following 120-residue polypeptide: Transmembrane protein 010R (120 aa).

A run of 2 helical transmembrane segments spans residues 40 to 60 (FCGA…ATAT) and 72 to 92 (SIFF…VWFL).

The protein belongs to the IIV-6 010R family.

It is found in the membrane. In Invertebrate iridescent virus 6 (IIV-6), this protein is Transmembrane protein 010R.